Reading from the N-terminus, the 862-residue chain is MACGAAERGPEPPAFQRHLEASTQRLAHGYGLRSMSELRDQEFGRLAGTVYLDHAGATLFPQSQLTNFTKDLMENVYGNPHSQNITSKLTHDTVEQVRYRILTHFHTTPEDYIVIFTAGSTAALRLVAEAFPWVSRSPENSGSHFCYLTDNHTSVVGMRKVAAAMSVTSIPVKPEDMWSAEGKDAGACDPDCQLPHLFCYPAQSNFSGTRYPLSWVEEVKSGRRSPVNAPGKWFVLLDAASYVSTSPLDLSAHQADFIPISFYKIFGLPTGLGALLVNKHVAPLLRKGYFGGGTAAAYLAGEDFYVPRSSVAERFEDGTISFLDVIALKHGFDALEHLTGGMVNIQQHTFALVQYTHSALSSLRYLNGAPVVRIYSDSEFSSPDVQGPIINFNVLDDGGKIIGYSQVDKMASLYNIHLRTGCFCNLGACQRHLGLSDEMVKKHFQAGHVCGDDVDIIDGRPTGSVRISFGYMSTLEDAQAFLRFISTIYLRSPSDQPVPQASISDAGALTSKSDCHSPQEGSCTDPSVCNGSYPDTNIMDLHPSLSKASSAQQTPQDKAAGILNGDPGSHIVTNIYLYPIKSCAAFEVTKWPVGSQGLLYDRSWMVVNHNGICMSQKQEPRLCLIQPFIDLQQRIMVIKAEGMEPIQVPLEEDGEQTQICQSRVCADRVNTYDCGENVSRWLSKFLGRLCHLIKQSPHFQRNARKTPKKGQPPGTTVALSLVNEAQYLLVNTSSILELQRQLNASDEHGKEESFSMKDLISRFRANIITKGARAFEEEKWDEISIGSLHFQVLGPCHRCQMICINQQTGQRNQDVFQTLSESRGRKVNFGVYLMHSYLDLSSPCFLSVGSEVLPVLKDCGVS.

Ser-34 is modified (phosphoserine). Lys-264 carries the N6-(pyridoxal phosphate)lysine modification. Cys-424 is a catalytic residue. Position 517 is a phosphoserine (Ser-517). One can recognise an MOSC domain in the interval 704-855 (RKTPKKGQPP…LSVGSEVLPV (152 aa)).

This sequence belongs to the class-V pyridoxal-phosphate-dependent aminotransferase family. MOCOS subfamily. Requires pyridoxal 5'-phosphate as cofactor.

The catalysed reaction is Mo-molybdopterin + L-cysteine + AH2 = thio-Mo-molybdopterin + L-alanine + A + H2O. The protein operates within cofactor biosynthesis; molybdopterin biosynthesis. Sulfurates the molybdenum cofactor. Sulfation of molybdenum is essential for xanthine dehydrogenase (XDH) and aldehyde oxidase (ADO) enzymes in which molybdenum cofactor is liganded by 1 oxygen and 1 sulfur atom in active form. The chain is Molybdenum cofactor sulfurase (Mocos) from Mus musculus (Mouse).